The primary structure comprises 563 residues: Pre-hexon-linking protein IIIa (563 aa).

Residues 1-117 form a peripentonal hexon-tethering domain region; it reads MRKRRTLTAP…ALLHRVSKYN (117 aa). Positions 148-261 are binding to hexon-linking protein; it reads GSLTALNSFL…FTDSVSISRD (114 aa). Position 235 is a phosphoserine; by host (Ser235). The residue at position 284 (Thr284) is a Phosphothreonine; by host. Positions 449–471 are disordered; it reads RTESRSVSRVPTPASSRRSSVAM. Residues Ser452 and Ser456 each carry the phosphoserine; by host modification. The span at 462–471 shows a compositional bias: low complexity; the sequence is ASSRRSSVAM. Phosphoserine; by host is present on residues Ser475 and Ser486. A disordered region spans residues 524 to 543; the sequence is SSAISSDESDDGMSKPDKFL. The propeptide occupies 549 to 563; sequence GNPFAHLRPKLGRCL.

The protein belongs to the adenoviridae hexon-linking protein IIIa family. As to quaternary structure, interacts with hexon proteins; this interaction tethers the peripentonal hexons to hexons situated in the facet. Interacts with the penton protein (via N-terminus). Interacts with packaging protein 3; this interaction is required to promote correct genome packaging. In terms of processing, cleaved near the C-terminus by the viral protease during virion maturation to form the mature protein.

The protein resides in the virion. It localises to the host nucleus. Functionally, structural component of the virion that acts as a cement protein on the capsid exterior which mediates the interactions between the hexons, including the peripentonal hexons, and reaches all the way to the penton vertices. Two hexon linking proteins IIIa, one from each facet, stabilize the unique edge interface between a pair of facets. As the virus enters the host cell, hexon linking proteins IIIa are shed concomitant with virion acidification in the endosome. During virus assembly, seems to play a role in the serotype specificity of the packaging of viral DNA via its interaction with packaging protein 3. This is Pre-hexon-linking protein IIIa from Canis lupus familiaris (Dog).